Reading from the N-terminus, the 170-residue chain is ATP synthase subunit b (170 aa).

Residues 22–41 (VLNWAVVVFGLYKFLPGFLG) traverse the membrane as a helical segment.

It belongs to the ATPase B chain family. In terms of assembly, F-type ATPases have 2 components, F(1) - the catalytic core - and F(0) - the membrane proton channel. F(1) has five subunits: alpha(3), beta(3), gamma(1), delta(1), epsilon(1). F(0) has four main subunits: a(1), b(1), b'(1) and c(10-14). The alpha and beta chains form an alternating ring which encloses part of the gamma chain. F(1) is attached to F(0) by a central stalk formed by the gamma and epsilon chains, while a peripheral stalk is formed by the delta, b and b' chains.

It is found in the cellular thylakoid membrane. Functionally, f(1)F(0) ATP synthase produces ATP from ADP in the presence of a proton or sodium gradient. F-type ATPases consist of two structural domains, F(1) containing the extramembraneous catalytic core and F(0) containing the membrane proton channel, linked together by a central stalk and a peripheral stalk. During catalysis, ATP synthesis in the catalytic domain of F(1) is coupled via a rotary mechanism of the central stalk subunits to proton translocation. In terms of biological role, component of the F(0) channel, it forms part of the peripheral stalk, linking F(1) to F(0). This Prochlorococcus marinus subsp. pastoris (strain CCMP1986 / NIES-2087 / MED4) protein is ATP synthase subunit b.